The following is a 182-amino-acid chain: Peptidoglycan recognition protein 1 (182 aa).

The first 18 residues, 1 to 18 (MLFACALLALLGLATSCS), serve as a signal peptide directing secretion. 3 disulfide bridges follow: Cys-17–Cys-141, Cys-33–Cys-78, and Cys-54–Cys-60. One can recognise an N-acetylmuramoyl-L-alanine amidase domain in the interval 39-167 (HPVRYVVISH…RDVQSTLSPG (129 aa)).

Belongs to the N-acetylmuramoyl-L-alanine amidase 2 family. As to quaternary structure, homodimer; disulfide-linked. Interacts with HSPA1A; this interaction forms a cytotoxic complex that is released by lymphokine-activated killer cells. Interacts with HSPBP1; this interaction blocks the cytotoxic activity of the PGLYRP1-HSPA1A complex. Strongly expressed in spleen and lung. Also detected in brain and thymus. In the lung, expressed in the intraalveolar space, in the brain, expressed in the Purkinje cells of the cerebellum and in certain layers of neurons in the hippocampus. Also detected in cells filling the space within the intestinal villus.

Its subcellular location is the cytoplasm. The protein resides in the secreted. Its function is as follows. Innate immunity protein that plays several important functions in antimicrobial and antitumor defense systems. Acts as a pattern receptor that binds to murein peptidoglycans (PGN) of Gram-positive bacteria and thus provides bactericidal activity. Forms an equimolar complex with heat shock protein HSPA1A and induces programmed cell death through apoptosis and necroptosis in tumor cell lines by activating the TNFR1 receptor on the target cell membrane. In addition, acts in complex with the Ca(2+)-binding protein S100A4 as a chemoattractant able to induce lymphocyte movement. Mechanistically, this complex acts as a ligand of the chemotactic receptors CCR5 and CXCR3 which are present on the cells of the immune system. Also promotes the activation of lymphocytes that become able to kill virus-infected cells as well as tumor cells by modulating the spectrum of their target-cell specificity. Induction of cytotoxicity on monocyte surface requires interaction with TREM1 receptor. The polypeptide is Peptidoglycan recognition protein 1 (Pglyrp1) (Mus musculus (Mouse)).